A 360-amino-acid chain; its full sequence is Cannabinoid receptor 2 (360 aa).

The Extracellular segment spans residues 1–33 (MAGCRELELTNGSNGGLEFNPMKEYMILSDAQQ). N-linked (GlcNAc...) asparagine glycosylation occurs at Asn-11. Residues 34–59 (IAVAVLCTLMGLLSALENVAVLYLIL) traverse the membrane as a helical segment. Residues 60–71 (SSQRLRRKPSYL) lie on the Cytoplasmic side of the membrane. The helical transmembrane segment at 72–92 (FIGSLAGADFLASVIFACNFV) threads the bilayer. The Extracellular segment spans residues 93–104 (IFHVFHGVDSRN). The chain crosses the membrane as a helical span at residues 105 to 129 (IFLLKIGSVTMTFTASVGSLLLTAV). Residues 130 to 149 (DRYLCLCYPPTYKALVTRGR) lie on the Cytoplasmic side of the membrane. A helical transmembrane segment spans residues 150 to 172 (ALVALGVMWVLSALISYLPLMGW). At 173–188 (TCCPSPCSELFPLIPN) the chain is on the extracellular side. A helical transmembrane segment spans residues 189–214 (DYLLGWLLFIAILFSGIIYTYGYVLW). Residues 215-246 (KAHQHVASLAEHQDRQVPGIARMRLDVRLAKT) lie on the Cytoplasmic side of the membrane. Residues 247–267 (LGLVMAVLLICWFPALALMGH) traverse the membrane as a helical segment. Over 268-279 (SLVTTLSDKVKE) the chain is Extracellular. Residues 280–301 (AFAFCSMLCLVNSMINPIIYAL) form a helical membrane-spanning segment. At 302–360 (RSGEIRSAAQHCLTGWKKYLQGLGSEGKEEAPKSSVTETEAEVKTTTGPGSRTPGCSNC) the chain is on the cytoplasmic side. The segment at 327-360 (EGKEEAPKSSVTETEAEVKTTTGPGSRTPGCSNC) is disordered. 2 positions are modified to phosphoserine: Ser-335 and Ser-336. Thr-338 carries the post-translational modification Phosphothreonine. The span at 349–360 (GPGSRTPGCSNC) shows a compositional bias: polar residues. A Phosphoserine modification is found at Ser-352.

This sequence belongs to the G-protein coupled receptor 1 family. In terms of processing, constitutively phosphorylated on Ser-352; phosphorylation increases cell internalization and desensitizes the receptor. Expressed in spleen and brain by neurons and glial cells (at protein level). Expressed in lung, testis and thymus but not in heart, liver or kidney. Expressed in cerebellum, cortex and brainstem.

Its subcellular location is the cell membrane. It localises to the cell projection. The protein resides in the dendrite. It is found in the perikaryon. In terms of biological role, heterotrimeric G protein-coupled receptor for endocannabinoid 2-arachidonoylglycerol mediating inhibition of adenylate cyclase. May function in inflammatory response, nociceptive transmission and bone homeostasis. The sequence is that of Cannabinoid receptor 2 (Cnr2) from Rattus norvegicus (Rat).